The primary structure comprises 419 residues: MNLTELKQKPIAELLEMSDAMGLENMARSRKQDIIFALLKKHAKSGEEISGDGVLEILQDGFGFLRSADSSYLAGPDDIYVSPSQIRRFNLRTGDTIIGKIRPPKEGERYFALLKVDSINFDRPENAKNKILFENLTPLFPNERMKMEAGNGSTEDLTGRVIDLCAPIGKGQRGLIVAPPKAGKTIMLQNIASNITRNNPECHLIVLLIDERPEEVTEMQRTVRGEVVASTFDEPPTRHVQVAEMVIEKAKRLVEHKKDVVILLDSITRLARAYNTVIPSSGKVLTGGVDAHALEKPKRFFGAARNIEEGGSLTILATALVETGSKMDEVIYEEFKGTGNMELPLDRKIAEKRVFPAININRSGTRREELLTSEDELQRMWILRKILHPMDEISAIEFLIDKLKQTKTNDEFFDSMKRK.

The Rho RNA-BD domain occupies 48–123 (EISGDGVLEI…LKVDSINFDR (76 aa)). 3 RNA-binding regions span residues 61–66 (GFGFLR), 78–80 (DIY), and 108–110 (ERY). Residues 169–174 (GKGQRG), 181–186 (KAGKTI), and R212 contribute to the ATP site. The tract at residues 284-288 (VLTGG) is RNA-binding 2.

Belongs to the Rho family. As to quaternary structure, homohexamer. The homohexamer assembles into an open ring structure.

Facilitates transcription termination by a mechanism that involves Rho binding to the nascent RNA, activation of Rho's RNA-dependent ATPase activity, and release of the mRNA from the DNA template. This is Transcription termination factor Rho from Pseudomonas aeruginosa (strain ATCC 15692 / DSM 22644 / CIP 104116 / JCM 14847 / LMG 12228 / 1C / PRS 101 / PAO1).